The primary structure comprises 313 residues: Ribose-phosphate pyrophosphokinase (313 aa).

Residues 37 to 39 (DGE) and 96 to 97 (RQ) each bind ATP. Residues His-131 and Asp-170 each contribute to the Mg(2+) site. Lys-193 is an active-site residue. Residues Arg-195, Asp-219, and 223–227 (DTAGT) contribute to the D-ribose 5-phosphate site.

The protein belongs to the ribose-phosphate pyrophosphokinase family. Class I subfamily. Homohexamer. It depends on Mg(2+) as a cofactor.

It is found in the cytoplasm. The catalysed reaction is D-ribose 5-phosphate + ATP = 5-phospho-alpha-D-ribose 1-diphosphate + AMP + H(+). The protein operates within metabolic intermediate biosynthesis; 5-phospho-alpha-D-ribose 1-diphosphate biosynthesis; 5-phospho-alpha-D-ribose 1-diphosphate from D-ribose 5-phosphate (route I): step 1/1. In terms of biological role, involved in the biosynthesis of the central metabolite phospho-alpha-D-ribosyl-1-pyrophosphate (PRPP) via the transfer of pyrophosphoryl group from ATP to 1-hydroxyl of ribose-5-phosphate (Rib-5-P). This is Ribose-phosphate pyrophosphokinase from Pseudomonas aeruginosa (strain ATCC 15692 / DSM 22644 / CIP 104116 / JCM 14847 / LMG 12228 / 1C / PRS 101 / PAO1).